The following is a 332-amino-acid chain: NADH-quinone oxidoreductase subunit H (332 aa).

Transmembrane regions (helical) follow at residues 4–24 (FAFFALETLIKCIIIIAIFAS), 44–64 (IGPDMVGPFGLIQLVADMIKL), 78–98 (FIFAIAPLISAICAFVSLAAI), 120–140 (VALLFVIGTSGLCFYAVFLGG), 165–185 (VGALALIAIIMLVGSFSLVDI), 194–214 (FSWLIFKQPLAFVLFIIALFI), 255–275 (IAGAILVTLLFLGGFNSFWII), 279–299 (IMMIVKSSFIFFWYFWARAAF), and 312–332 (YLILIPLAVLNLLITALTVLL).

Belongs to the complex I subunit 1 family. NDH-1 is composed of 14 different subunits. Subunits NuoA, H, J, K, L, M, N constitute the membrane sector of the complex.

Its subcellular location is the cell inner membrane. The enzyme catalyses a quinone + NADH + 5 H(+)(in) = a quinol + NAD(+) + 4 H(+)(out). In terms of biological role, NDH-1 shuttles electrons from NADH, via FMN and iron-sulfur (Fe-S) centers, to quinones in the respiratory chain. The immediate electron acceptor for the enzyme in this species is believed to be ubiquinone. Couples the redox reaction to proton translocation (for every two electrons transferred, four hydrogen ions are translocated across the cytoplasmic membrane), and thus conserves the redox energy in a proton gradient. This subunit may bind ubiquinone. The chain is NADH-quinone oxidoreductase subunit H from Campylobacter jejuni subsp. jejuni serotype O:2 (strain ATCC 700819 / NCTC 11168).